The sequence spans 235 residues: Probable membrane-associated kinase regulator 6 (235 aa).

A disordered region spans residues 108 to 140 (SAATEEESEPLDTTTSEKIDTRGLNSKPSPTSS). The span at 130 to 140 (GLNSKPSPTSS) shows a compositional bias: polar residues.

The protein resides in the cell membrane. May be involved in abscisic acid signaling by acting as a kinase regulator. In Arabidopsis thaliana (Mouse-ear cress), this protein is Probable membrane-associated kinase regulator 6 (MAKR6).